The chain runs to 244 residues: Thiol S-methyltransferase TMT1A (244 aa).

A targeting to lipid droplets region spans residues 1 to 28 (MELTIFILRLAIYILTFPLYLLNFLGLW). The signal sequence occupies residues 1–29 (MELTIFILRLAIYILTFPLYLLNFLGLWS).

This sequence belongs to the methyltransferase superfamily. (Microbial infection) Interacts with HCV non-structural protein 4B/NS4B (via C-terminal region); this interaction may promote the recruitment of NS4B in the proximity of lipid droplet. As to quaternary structure, self-associates. Interacts with SNRNP200; this interaction may promote the odontogenic differentiation. In terms of processing, methylated at lysine residues most likely by EZH2. Expressed in the liver.

It is found in the lipid droplet. The protein localises to the endoplasmic reticulum. It localises to the membrane. The protein resides in the microsome. Its subcellular location is the cytoplasm. It is found in the cytosol. It carries out the reaction a thiol + S-adenosyl-L-methionine = a methyl thioether + S-adenosyl-L-homocysteine + H(+). The catalysed reaction is an adenosine in mRNA + S-adenosyl-L-methionine = an N(6)-methyladenosine in mRNA + S-adenosyl-L-homocysteine + H(+). Inhibited by 2,3-dichloro-alpha-methylbenzylamine (DCMB). Functionally, thiol S-methyltransferase that catalyzes the transfer of a methyl group from S-adenosyl-L-methionine to alkyl and phenolic thiol-containing acceptor substrates. Together with TMT1B accounts for most of S-thiol methylation activity in the endoplasmic reticulum of hepatocytes. Able to methylate the N6 position of adenosine residues in long non-coding RNAs (lncRNAs). May facilitate lncRNAs transfer into exosomes at the tumor-stroma interface. Promotes osteogenic and odontogenic differentiation by regulating the expression of genes involved in stem cell differentiation and survival. Targeted from the endoplasmic reticulum to lipid droplets, where it recruits cellular proteins to form functional organelles. Its function is as follows. (Microbial infection) May be involved in the assembly and release stages of hepatitis C virus (HCV) life cycle and thus play a crucial role in HCV propagation. This is Thiol S-methyltransferase TMT1A from Homo sapiens (Human).